Consider the following 290-residue polypeptide: ATP synthase gamma chain (290 aa).

This sequence belongs to the ATPase gamma chain family. As to quaternary structure, F-type ATPases have 2 components, CF(1) - the catalytic core - and CF(0) - the membrane proton channel. CF(1) has five subunits: alpha(3), beta(3), gamma(1), delta(1), epsilon(1). CF(0) has three main subunits: a, b and c.

It is found in the cell inner membrane. Functionally, produces ATP from ADP in the presence of a proton gradient across the membrane. The gamma chain is believed to be important in regulating ATPase activity and the flow of protons through the CF(0) complex. This is ATP synthase gamma chain from Thiobacillus denitrificans (strain ATCC 25259 / T1).